A 364-amino-acid chain; its full sequence is Probable dual-specificity RNA methyltransferase RlmN (364 aa).

Catalysis depends on Glu106, which acts as the Proton acceptor. The Radical SAM core domain occupies 112–350 (YPQRNTVCIS…SCTVRDTRGR (239 aa)). An intrachain disulfide couples Cys119 to Cys356. Positions 126, 130, and 133 each coordinate [4Fe-4S] cluster. Residues 177–178 (GE), Ser211, 234–236 (SLH), and Asn313 each bind S-adenosyl-L-methionine. The active-site S-methylcysteine intermediate is the Cys356.

The protein belongs to the radical SAM superfamily. RlmN family. Requires [4Fe-4S] cluster as cofactor.

The protein localises to the cytoplasm. It catalyses the reaction adenosine(2503) in 23S rRNA + 2 reduced [2Fe-2S]-[ferredoxin] + 2 S-adenosyl-L-methionine = 2-methyladenosine(2503) in 23S rRNA + 5'-deoxyadenosine + L-methionine + 2 oxidized [2Fe-2S]-[ferredoxin] + S-adenosyl-L-homocysteine. The catalysed reaction is adenosine(37) in tRNA + 2 reduced [2Fe-2S]-[ferredoxin] + 2 S-adenosyl-L-methionine = 2-methyladenosine(37) in tRNA + 5'-deoxyadenosine + L-methionine + 2 oxidized [2Fe-2S]-[ferredoxin] + S-adenosyl-L-homocysteine. In terms of biological role, specifically methylates position 2 of adenine 2503 in 23S rRNA and position 2 of adenine 37 in tRNAs. The protein is Probable dual-specificity RNA methyltransferase RlmN of Mycobacterium marinum (strain ATCC BAA-535 / M).